The sequence spans 138 residues: Small ribosomal subunit protein uS11c (138 aa).

The tract at residues 1–23 (MAKPILRIGSRKNTRSGSRKNVR) is disordered. The segment covering 9–23 (GSRKNTRSGSRKNVR) has biased composition (basic residues).

The protein belongs to the universal ribosomal protein uS11 family. As to quaternary structure, part of the 30S ribosomal subunit.

The protein resides in the plastid. It is found in the chloroplast. This chain is Small ribosomal subunit protein uS11c, found in Crucihimalaya wallichii (Rock-cress).